Here is a 694-residue protein sequence, read N- to C-terminus: GRB2-associated-binding protein 1 (694 aa).

At serine 2 the chain carries N-acetylserine. Residues 5–116 (EVVCSGWLRK…WVRCICDICG (112 aa)) enclose the PH domain. Disordered regions lie at residues 122–164 (EDPV…PYQL) and 194–231 (PEPT…SKHG). Positions 145–157 (APPSTQADSSSAT) are enriched in polar residues. Residues 194–203 (PEPTRTHADS) are compositionally biased toward basic and acidic residues. Positions 204 to 231 (AKSTSSETDCNDNVPSHKNPASSQSKHG) are enriched in polar residues. A phosphoserine mark is found at serine 251, serine 253, serine 266, and serine 304. A disordered region spans residues 323-386 (FPEGTLGQTS…TAGMSPSRSN (64 aa)). Over residues 362–386 (IPRTASDTDSSYCIPTAGMSPSRSN) the composition is skewed to polar residues. Position 387 is a phosphothreonine (threonine 387). Serine 402 and serine 454 each carry phosphoserine. 2 disordered regions span residues 493-532 (AHMG…VKPA) and 544-656 (ELQA…ADER). Phosphoserine is present on alanine 547. Positions 594 to 611 (PNLSSEDPNLFGSNSLDG) are enriched in polar residues. Tyrosine 627 bears the Phosphotyrosine mark. At threonine 638 the chain carries Phosphothreonine. Serine 651 carries the post-translational modification Phosphoserine. The residue at position 659 (tyrosine 659) is a Phosphotyrosine. Residues 671–694 (KSTREAWTDGRQSTESETPAKSVK) form a disordered region. The segment covering 672 to 684 (STREAWTDGRQST) has biased composition (basic and acidic residues). A Phosphoserine modification is found at serine 683. Residues 685–694 (ESETPAKSVK) show a composition bias toward polar residues.

It belongs to the GAB family. In terms of assembly, identified in a complex containing FRS2, GRB2, GAB1, PIK3R1 and SOS1. Forms a tripartite complex containing GAB1, METTL13 and SPRY2. Within the complex interacts with METTL13. Interacts with GRB2 and with other SH2-containing proteins. Interacts with phosphorylated LAT2. Interacts with PTPRJ. Interacts (phosphorylated) with PTPN11. Interacts with HCK. In terms of processing, phosphorylated in response to FGFR1 activation. Phosphorylated on tyrosine residue(s) by the epidermal growth factor receptor (EGFR) and the insulin receptor (INSR). Tyrosine phosphorylation of GAB1 mediates interaction with several proteins that contain SH2 domains. Phosphorylated on tyrosine residues by HCK upon IL6 signaling.

Adapter protein that plays a role in intracellular signaling cascades triggered by activated receptor-type kinases. Plays a role in FGFR1 signaling. Probably involved in signaling by the epidermal growth factor receptor (EGFR) and the insulin receptor (INSR). Involved in the MET/HGF-signaling pathway. The polypeptide is GRB2-associated-binding protein 1 (GAB1) (Homo sapiens (Human)).